Consider the following 587-residue polypeptide: Solute carrier family 13 member 2 (587 aa).

4 consecutive transmembrane segments (helical) span residues phenylalanine 13–threonine 33, alanine 53–methionine 73, threonine 86–histidine 106, and serine 136–leucine 156. The tract at residues lysine 188–glutamate 208 is disordered. Helical transmembrane passes span phenylalanine 264 to phenylalanine 284, valine 329 to tryptophan 349, threonine 367 to methionine 387, threonine 407 to alanine 427, proline 445 to phenylalanine 465, leucine 477 to methionine 497, leucine 506 to leucine 526, and glycine 535 to isoleucine 555.

It belongs to the SLC13A/DASS transporter (TC 2.A.47) family. NADC subfamily. In terms of tissue distribution, expressed in large and small intestine and in the kidney proximal tubules.

The protein localises to the apical cell membrane. The enzyme catalyses succinate(out) + 3 Na(+)(out) = succinate(in) + 3 Na(+)(in). It carries out the reaction fumarate(out) + 3 Na(+)(out) = fumarate(in) + 3 Na(+)(in). It catalyses the reaction 2-oxoglutarate(out) + 3 Na(+)(out) = 2-oxoglutarate(in) + 3 Na(+)(in). With respect to regulation, li(+) decreases succinate transport in the presence of Na(+), by competing at one of the three cation binding sites. In terms of biological role, low-affinity sodium-dicarboxylate cotransporter, that mediates the entry of citric acid cycle intermediates, such as succinate, citrate, fumarate and alpha-ketoglutarate (2-oxoglutarate) into the small intestine and renal proximal tubule. Transports the dicarboxylate into the cell with a probable stoichiometry of 3 Na(+) for 1 divalent dicarboxylate, rendering the process electrogenic. Citrate is transported in protonated form as a divalent anion, rather than the trivalent form which is normally found in blood. Has a critical role in renal dicarboxylate transport. The polypeptide is Solute carrier family 13 member 2 (Slc13a2) (Rattus norvegicus (Rat)).